Here is a 302-residue protein sequence, read N- to C-terminus: D-alanine--D-alanine ligase B (302 aa).

The ATP-grasp domain maps to 99–294 (KKVLKAENIR…YSKFIDLIIE (196 aa)). 126-181 (IEEIGYPVFVKPNNGGSSVATFKVYKKEDIKNSVMEGLKYDEEVIIESFIKGREIT) provides a ligand contact to ATP. Mg(2+) contacts are provided by Asp-248, Glu-261, and Asn-263.

It belongs to the D-alanine--D-alanine ligase family. The cofactor is Mg(2+). Requires Mn(2+) as cofactor.

The protein localises to the cytoplasm. The catalysed reaction is 2 D-alanine + ATP = D-alanyl-D-alanine + ADP + phosphate + H(+). The protein operates within cell wall biogenesis; peptidoglycan biosynthesis. Its function is as follows. Cell wall formation. This chain is D-alanine--D-alanine ligase B, found in Clostridium perfringens (strain 13 / Type A).